The sequence spans 428 residues: Enolase (428 aa).

Gln163 lines the (2R)-2-phosphoglycerate pocket. The active-site Proton donor is the Glu205. Mg(2+)-binding residues include Asp242, Glu285, and Asp312. Residues Lys337, Arg366, Ser367, and Lys388 each contribute to the (2R)-2-phosphoglycerate site. Catalysis depends on Lys337, which acts as the Proton acceptor.

It belongs to the enolase family. The cofactor is Mg(2+).

It localises to the cytoplasm. Its subcellular location is the secreted. The protein localises to the cell surface. The enzyme catalyses (2R)-2-phosphoglycerate = phosphoenolpyruvate + H2O. It participates in carbohydrate degradation; glycolysis; pyruvate from D-glyceraldehyde 3-phosphate: step 4/5. Catalyzes the reversible conversion of 2-phosphoglycerate (2-PG) into phosphoenolpyruvate (PEP). It is essential for the degradation of carbohydrates via glycolysis. The sequence is that of Enolase from Polynucleobacter asymbioticus (strain DSM 18221 / CIP 109841 / QLW-P1DMWA-1) (Polynucleobacter necessarius subsp. asymbioticus).